The primary structure comprises 396 residues: 8-amino-7-oxononanoate synthase (396 aa).

Residue Arg-19 coordinates substrate. 106–107 (GY) is a pyridoxal 5'-phosphate binding site. His-131 serves as a coordination point for substrate. Positions 176, 204, and 233 each coordinate pyridoxal 5'-phosphate. Residue Lys-236 is modified to N6-(pyridoxal phosphate)lysine. Thr-350 contacts substrate.

This sequence belongs to the class-II pyridoxal-phosphate-dependent aminotransferase family. BioF subfamily. Homodimer. It depends on pyridoxal 5'-phosphate as a cofactor.

It carries out the reaction 6-carboxyhexanoyl-[ACP] + L-alanine + H(+) = (8S)-8-amino-7-oxononanoate + holo-[ACP] + CO2. It participates in cofactor biosynthesis; biotin biosynthesis. Functionally, catalyzes the decarboxylative condensation of pimeloyl-[acyl-carrier protein] and L-alanine to produce 8-amino-7-oxononanoate (AON), [acyl-carrier protein], and carbon dioxide. The chain is 8-amino-7-oxononanoate synthase from Pseudomonas syringae pv. syringae (strain B728a).